A 108-amino-acid chain; its full sequence is MMKNQLAGLMKQAQAMQDNMKKMQEQLALIEVEGQSGAGLVKIVMSCKNDVKRVSIDPSLLADDKDMLEDLVAAAFNDAVRKAEATSQEKMAGATAGMPMPPGFKMPF.

Positions 86–108 (TSQEKMAGATAGMPMPPGFKMPF) are disordered. A compositionally biased stretch (pro residues) spans 99-108 (PMPPGFKMPF).

Belongs to the YbaB/EbfC family. As to quaternary structure, homodimer.

The protein localises to the cytoplasm. It localises to the nucleoid. Its function is as follows. Binds to DNA and alters its conformation. May be involved in regulation of gene expression, nucleoid organization and DNA protection. In Herminiimonas arsenicoxydans, this protein is Nucleoid-associated protein HEAR1046.